Consider the following 207-residue polypeptide: LexA repressor (207 aa).

The segment at residues 28-48 (RAEISRELGFKSANAAEEHLK) is a DNA-binding region (H-T-H motif). Residues S123 and K160 each act as for autocatalytic cleavage activity in the active site.

It belongs to the peptidase S24 family. In terms of assembly, homodimer.

It catalyses the reaction Hydrolysis of Ala-|-Gly bond in repressor LexA.. Represses a number of genes involved in the response to DNA damage (SOS response), including recA and lexA. In the presence of single-stranded DNA, RecA interacts with LexA causing an autocatalytic cleavage which disrupts the DNA-binding part of LexA, leading to derepression of the SOS regulon and eventually DNA repair. This Haemophilus influenzae (strain 86-028NP) protein is LexA repressor.